The primary structure comprises 277 residues: Sulfur carrier protein FdhD (277 aa).

The active-site Cysteine persulfide intermediate is the cysteine 121. Phenylalanine 260–arginine 265 contributes to the Mo-bis(molybdopterin guanine dinucleotide) binding site.

The protein belongs to the FdhD family.

The protein localises to the cytoplasm. Its function is as follows. Required for formate dehydrogenase (FDH) activity. Acts as a sulfur carrier protein that transfers sulfur from IscS to the molybdenum cofactor prior to its insertion into FDH. The protein is Sulfur carrier protein FdhD of Escherichia coli O8 (strain IAI1).